The chain runs to 404 residues: 4-hydroxy-3-methylbut-2-en-1-yl diphosphate synthase (ferredoxin) (404 aa).

[4Fe-4S] cluster is bound by residues Cys-313, Cys-316, Cys-347, and Glu-354.

Belongs to the IspG family. Requires [4Fe-4S] cluster as cofactor.

The enzyme catalyses (2E)-4-hydroxy-3-methylbut-2-enyl diphosphate + 2 oxidized [2Fe-2S]-[ferredoxin] + H2O = 2-C-methyl-D-erythritol 2,4-cyclic diphosphate + 2 reduced [2Fe-2S]-[ferredoxin] + H(+). Its pathway is isoprenoid biosynthesis; isopentenyl diphosphate biosynthesis via DXP pathway; isopentenyl diphosphate from 1-deoxy-D-xylulose 5-phosphate: step 5/6. Functionally, converts 2C-methyl-D-erythritol 2,4-cyclodiphosphate (ME-2,4cPP) into 1-hydroxy-2-methyl-2-(E)-butenyl 4-diphosphate. The chain is 4-hydroxy-3-methylbut-2-en-1-yl diphosphate synthase (ferredoxin) from Crocosphaera subtropica (strain ATCC 51142 / BH68) (Cyanothece sp. (strain ATCC 51142)).